Here is a 66-residue protein sequence, read N- to C-terminus: Photosystem II reaction center protein J (66 aa).

Residues 1–25 (MSGKKSPYPDGRIPDRNPDGTPAVP) form a disordered region. The helical transmembrane segment at 37-57 (LWLVATAGGMAVLFVVGLFFY) threads the bilayer.

This sequence belongs to the PsbJ family. PSII is composed of 1 copy each of membrane proteins PsbA, PsbB, PsbC, PsbD, PsbE, PsbF, PsbH, PsbI, PsbJ, PsbK, PsbL, PsbM, PsbT, PsbX, PsbY, PsbZ, Psb30/Ycf12, peripheral proteins PsbO, CyanoQ (PsbQ), PsbU, PsbV and a large number of cofactors. It forms dimeric complexes.

It localises to the cellular thylakoid membrane. One of the components of the core complex of photosystem II (PSII). PSII is a light-driven water:plastoquinone oxidoreductase that uses light energy to abstract electrons from H(2)O, generating O(2) and a proton gradient subsequently used for ATP formation. It consists of a core antenna complex that captures photons, and an electron transfer chain that converts photonic excitation into a charge separation. This Synechococcus sp. (strain CC9605) protein is Photosystem II reaction center protein J.